The primary structure comprises 209 residues: Uracil phosphoribosyltransferase (209 aa).

5-phospho-alpha-D-ribose 1-diphosphate-binding positions include arginine 79, arginine 104, and 131–139; that span reads DPMLATGNS. Uracil contacts are provided by residues isoleucine 194 and 199 to 201; that span reads GDA. Aspartate 200 is a 5-phospho-alpha-D-ribose 1-diphosphate binding site.

The protein belongs to the UPRTase family. Requires Mg(2+) as cofactor.

The catalysed reaction is UMP + diphosphate = 5-phospho-alpha-D-ribose 1-diphosphate + uracil. Its pathway is pyrimidine metabolism; UMP biosynthesis via salvage pathway; UMP from uracil: step 1/1. Its activity is regulated as follows. Allosterically activated by GTP. Its function is as follows. Catalyzes the conversion of uracil and 5-phospho-alpha-D-ribose 1-diphosphate (PRPP) to UMP and diphosphate. The polypeptide is Uracil phosphoribosyltransferase (Rhodococcus jostii (strain RHA1)).